The primary structure comprises 80 residues: Metallothionein-like protein 1 (80 aa).

The protein belongs to the metallothionein superfamily. Type 15 family.

Metallothioneins have a high content of cysteine residues that bind various heavy metals. The chain is Metallothionein-like protein 1 (METAL1) from Coffea arabica (Arabian coffee).